The chain runs to 115 residues: NADH-ubiquinone oxidoreductase chain 3 (115 aa).

The next 3 membrane-spanning stretches (helical) occupy residues 4-24, 55-75, and 84-104; these read MLAM…AFWL, FFLV…LLPL, and MITT…GLSY.

It belongs to the complex I subunit 3 family. As to quaternary structure, core subunit of respiratory chain NADH dehydrogenase (Complex I) which is composed of 45 different subunits. Interacts with TMEM186. Interacts with TMEM242.

The protein resides in the mitochondrion inner membrane. It carries out the reaction a ubiquinone + NADH + 5 H(+)(in) = a ubiquinol + NAD(+) + 4 H(+)(out). Functionally, core subunit of the mitochondrial membrane respiratory chain NADH dehydrogenase (Complex I) which catalyzes electron transfer from NADH through the respiratory chain, using ubiquinone as an electron acceptor. Essential for the catalytic activity of complex I. The polypeptide is NADH-ubiquinone oxidoreductase chain 3 (Reithrodon auritus (Bunny rat)).